The chain runs to 413 residues: Cell division protein FtsZ 2 (413 aa).

Residues 132–134 (GTG), Glu-171, Arg-175, and Asp-218 each bind GTP.

It belongs to the FtsZ family. In terms of assembly, homodimer. Polymerizes to form a dynamic ring structure in a strictly GTP-dependent manner. Interacts directly with several other division proteins.

Its subcellular location is the cytoplasm. Its function is as follows. Essential cell division protein that forms a contractile ring structure (Z ring) at the future cell division site. The regulation of the ring assembly controls the timing and the location of cell division. One of the functions of the FtsZ ring is to recruit other cell division proteins to the septum to produce a new cell wall between the dividing cells. Binds GTP and shows GTPase activity. This chain is Cell division protein FtsZ 2, found in Thermococcus kodakarensis (strain ATCC BAA-918 / JCM 12380 / KOD1) (Pyrococcus kodakaraensis (strain KOD1)).